The chain runs to 146 residues: Hemoglobin subunit beta (146 aa).

The 145-residue stretch at 2–146 (HWSAEEKQLI…VAHALARKYH (145 aa)) folds into the Globin domain. Heme b contacts are provided by histidine 63 and histidine 92.

Belongs to the globin family. Heterotetramer of two alpha chains and two beta chains. In terms of tissue distribution, red blood cells.

Its function is as follows. Involved in oxygen transport from the lung to the various peripheral tissues. This chain is Hemoglobin subunit beta (HBB), found in Psittacula krameri (Rose-ringed parakeet).